Reading from the N-terminus, the 430-residue chain is UDP-N-acetylglucosamine 1-carboxyvinyltransferase (430 aa).

22-23 (KN) provides a ligand contact to phosphoenolpyruvate. R102 contributes to the UDP-N-acetyl-alpha-D-glucosamine binding site. The active-site Proton donor is the C126. C126 bears the 2-(S-cysteinyl)pyruvic acid O-phosphothioketal mark. Residues 131–135 (RPVDL), 172–175 (KVSV), D317, and I339 each bind UDP-N-acetyl-alpha-D-glucosamine.

Belongs to the EPSP synthase family. MurA subfamily.

The protein resides in the cytoplasm. It carries out the reaction phosphoenolpyruvate + UDP-N-acetyl-alpha-D-glucosamine = UDP-N-acetyl-3-O-(1-carboxyvinyl)-alpha-D-glucosamine + phosphate. It functions in the pathway cell wall biogenesis; peptidoglycan biosynthesis. Cell wall formation. Adds enolpyruvyl to UDP-N-acetylglucosamine. The chain is UDP-N-acetylglucosamine 1-carboxyvinyltransferase from Rhizobium johnstonii (strain DSM 114642 / LMG 32736 / 3841) (Rhizobium leguminosarum bv. viciae).